Consider the following 278-residue polypeptide: Undecaprenyl-diphosphatase 3 (278 aa).

Transmembrane regions (helical) follow at residues 42–62 (DITAFTAIIQVGAVFATLLYF), 88–108 (YRFGWAVILGSIPIGLVGVAF), 119–139 (LWFVGGALILWSGVMGYADHV), 187–207 (VAVTRLSFFLSIPALMAAAAL), 224–244 (ATIIATVVSFAVAYVAIAWLL), and 254–274 (VFIGYRLALGATVLFLVATGI).

Belongs to the UppP family.

It is found in the cell membrane. The catalysed reaction is di-trans,octa-cis-undecaprenyl diphosphate + H2O = di-trans,octa-cis-undecaprenyl phosphate + phosphate + H(+). Catalyzes the dephosphorylation of undecaprenyl diphosphate (UPP). Confers resistance to bacitracin. This is Undecaprenyl-diphosphatase 3 from Frankia casuarinae (strain DSM 45818 / CECT 9043 / HFP020203 / CcI3).